The following is a 114-amino-acid chain: Large ribosomal subunit protein uL22 (114 aa).

It belongs to the universal ribosomal protein uL22 family. As to quaternary structure, part of the 50S ribosomal subunit.

In terms of biological role, this protein binds specifically to 23S rRNA; its binding is stimulated by other ribosomal proteins, e.g. L4, L17, and L20. It is important during the early stages of 50S assembly. It makes multiple contacts with different domains of the 23S rRNA in the assembled 50S subunit and ribosome. Functionally, the globular domain of the protein is located near the polypeptide exit tunnel on the outside of the subunit, while an extended beta-hairpin is found that lines the wall of the exit tunnel in the center of the 70S ribosome. This chain is Large ribosomal subunit protein uL22, found in Streptococcus mutans serotype c (strain ATCC 700610 / UA159).